A 348-amino-acid polypeptide reads, in one-letter code: A-type ATP synthase subunit C (348 aa).

The protein belongs to the V-ATPase V0D/AC39 subunit family. As to quaternary structure, has multiple subunits with at least A(3), B(3), C, D, E, F, H, I and proteolipid K(x).

It is found in the cell membrane. Component of the A-type ATP synthase that produces ATP from ADP in the presence of a proton gradient across the membrane. The sequence is that of A-type ATP synthase subunit C from Haloferax volcanii (strain ATCC 29605 / DSM 3757 / JCM 8879 / NBRC 14742 / NCIMB 2012 / VKM B-1768 / DS2) (Halobacterium volcanii).